The primary structure comprises 283 residues: E3 ubiquitin-protein ligase SGR9, amyloplastic (283 aa).

Residues 1–32 (MEDENTTIIMASLSALSPSHLTNLTHSILSIS) constitute an amyloplast transit peptide. An RING-type; atypical zinc finger spans residues 214–255 (CVICKEEMSEGRDVCEMPCQHFFHWKCILPWLSKKNTCPFCR).

In terms of processing, auto-ubiquitinated as part of the enzymatic reaction. As to expression, expressed in seedlings, hypocotyls, roots and stems. Present especially in hypocotyl and inflorescence endodermis, as well as in root cap columella, tissues that act as statocytes.

The protein localises to the plastid. Its subcellular location is the amyloplast. It carries out the reaction S-ubiquitinyl-[E2 ubiquitin-conjugating enzyme]-L-cysteine + [acceptor protein]-L-lysine = [E2 ubiquitin-conjugating enzyme]-L-cysteine + N(6)-ubiquitinyl-[acceptor protein]-L-lysine.. The protein operates within protein modification; protein ubiquitination. E3 ubiquitin-protein ligase which accepts ubiquitin from an E2 ubiquitin-conjugating enzyme in the form of a thioester and then directly transfers the ubiquitin to targeted substrates. Modulates amyloplast dynamics and sedimentation in statocytes during inflorescence, hypocotyl and root gravitropism, probably by regulating amyloplast interaction with actin filaments (AFs) in endodermal cells. This chain is E3 ubiquitin-protein ligase SGR9, amyloplastic (SGR9), found in Arabidopsis thaliana (Mouse-ear cress).